Here is a 289-residue protein sequence, read N- to C-terminus: Energy-coupling factor transporter ATP-binding protein EcfA2 (289 aa).

One can recognise an ABC transporter domain in the interval 3-246 (IQAKKLNYTY…PEWLKNHHLN (244 aa)). 40–47 (GHTGSGKS) lines the ATP pocket.

The protein belongs to the ABC transporter superfamily. Energy-coupling factor EcfA family. Forms a stable energy-coupling factor (ECF) transporter complex composed of 2 membrane-embedded substrate-binding proteins (S component), 2 ATP-binding proteins (A component) and 2 transmembrane proteins (T component).

The protein localises to the cell membrane. Its function is as follows. ATP-binding (A) component of a common energy-coupling factor (ECF) ABC-transporter complex. Unlike classic ABC transporters this ECF transporter provides the energy necessary to transport a number of different substrates. This is Energy-coupling factor transporter ATP-binding protein EcfA2 from Ligilactobacillus salivarius (strain UCC118) (Lactobacillus salivarius).